Reading from the N-terminus, the 433-residue chain is Enolase (433 aa).

Serine 1 is subject to N-acetylserine. (2R)-2-phosphoglycerate contacts are provided by serine 36 and histidine 157. Catalysis depends on glutamate 209, which acts as the Proton donor. The Mn(2+) site is built by aspartate 244, glutamate 294, and aspartate 319. Residues lysine 344, arginine 373, and serine 374 each contribute to the (2R)-2-phosphoglycerate site. Residue lysine 344 is the Proton acceptor of the active site.

This sequence belongs to the enolase family. Homodimer. Mg(2+) serves as cofactor.

Its subcellular location is the cytoplasm. The enzyme catalyses (2R)-2-phosphoglycerate = phosphoenolpyruvate + H2O. The protein operates within carbohydrate degradation; glycolysis; pyruvate from D-glyceraldehyde 3-phosphate: step 4/5. Its activity is regulated as follows. Inhibited by 2-phosphoglycolic acid. This is Enolase from Homarus gammarus (European lobster).